Reading from the N-terminus, the 377-residue chain is Anhydro-N-acetylmuramic acid kinase (377 aa).

19–26 (GTSLDGVD) is an ATP binding site.

Belongs to the anhydro-N-acetylmuramic acid kinase family.

The catalysed reaction is 1,6-anhydro-N-acetyl-beta-muramate + ATP + H2O = N-acetyl-D-muramate 6-phosphate + ADP + H(+). It participates in amino-sugar metabolism; 1,6-anhydro-N-acetylmuramate degradation. It functions in the pathway cell wall biogenesis; peptidoglycan recycling. Catalyzes the specific phosphorylation of 1,6-anhydro-N-acetylmuramic acid (anhMurNAc) with the simultaneous cleavage of the 1,6-anhydro ring, generating MurNAc-6-P. Is required for the utilization of anhMurNAc either imported from the medium or derived from its own cell wall murein, and thus plays a role in cell wall recycling. This chain is Anhydro-N-acetylmuramic acid kinase, found in Roseobacter denitrificans (strain ATCC 33942 / OCh 114) (Erythrobacter sp. (strain OCh 114)).